A 79-amino-acid chain; its full sequence is Small ribosomal subunit protein uS17 (79 aa).

The protein belongs to the universal ribosomal protein uS17 family. As to quaternary structure, part of the 30S ribosomal subunit.

Functionally, one of the primary rRNA binding proteins, it binds specifically to the 5'-end of 16S ribosomal RNA. This Mesorhizobium japonicum (strain LMG 29417 / CECT 9101 / MAFF 303099) (Mesorhizobium loti (strain MAFF 303099)) protein is Small ribosomal subunit protein uS17.